The chain runs to 338 residues: Glycerol-3-phosphate dehydrogenase [NAD(P)+] (338 aa).

Positions 12, 13, 33, and 110 each coordinate NADPH. Sn-glycerol 3-phosphate contacts are provided by lysine 110, glycine 141, and serine 143. Alanine 145 lines the NADPH pocket. Residues lysine 196, aspartate 249, serine 259, arginine 260, and asparagine 261 each contribute to the sn-glycerol 3-phosphate site. Residue lysine 196 is the Proton acceptor of the active site. Residue arginine 260 participates in NADPH binding. Positions 284 and 286 each coordinate NADPH.

Belongs to the NAD-dependent glycerol-3-phosphate dehydrogenase family.

The protein resides in the cytoplasm. The enzyme catalyses sn-glycerol 3-phosphate + NAD(+) = dihydroxyacetone phosphate + NADH + H(+). It catalyses the reaction sn-glycerol 3-phosphate + NADP(+) = dihydroxyacetone phosphate + NADPH + H(+). It functions in the pathway membrane lipid metabolism; glycerophospholipid metabolism. In terms of biological role, catalyzes the reduction of the glycolytic intermediate dihydroxyacetone phosphate (DHAP) to sn-glycerol 3-phosphate (G3P), the key precursor for phospholipid synthesis. This chain is Glycerol-3-phosphate dehydrogenase [NAD(P)+], found in Limosilactobacillus reuteri (strain DSM 20016) (Lactobacillus reuteri).